The sequence spans 412 residues: Vacuolar calcium ion transporter (412 aa).

Residues 1-55 lie on the Cytoplasmic side of the membrane; it reads MIERLKIAKNRLEAMNSFNFPAQDRHERAPLLGSEYDHSMARQLSLLNVVGMTKS. Residues 56–76 traverse the membrane as a helical segment; that stretch reads VLMSSYFNLMLVFVPIGLIAG. At 77 to 83 the chain is on the lumenal side; that stretch reads WFEWNAK. Residues 84 to 104 traverse the membrane as a helical segment; that stretch reads SVFILNMLAIIPLASLLSFAT. Residues 105–114 are Cytoplasmic-facing; that stretch reads EQLSIISGPT. The chain crosses the membrane as a helical span at residues 115 to 135; that stretch reads LGALLNASFGNAIELIVGVLA. Topologically, residues 136 to 148 are lumenal; the sequence is LKRGELRIVQSSL. A helical membrane pass occupies residues 149 to 169; the sequence is LGSILSNLLLVFGMCLVTTGI. Topologically, residues 170-177 are cytoplasmic; the sequence is RREITTFN. Residues 178–198 traverse the membrane as a helical segment; that stretch reads ITVAQTMIAMLALSTATILIP. At 199 to 215 the chain is on the lumenal side; sequence ATFHYSLPDNANSENAL. The helical transmembrane segment at 216 to 236 threads the bilayer; sequence LHVSRGTAVIVLIVYVLLLVF. At 237-264 the chain is on the cytoplasmic side; sequence QLKTHKHVCHDPSEVEEETEPRILGLRS. The helical transmembrane segment at 265 to 285 threads the bilayer; it reads SIAMLAIVTVFVSLCADYLVG. Over 286-299 the chain is Lumenal; the sequence is SIDQLVEEVNISKT. The helical transmembrane segment at 300-320 threads the bilayer; the sequence is FVGLVILPVVGNAAEHVTAIV. The Cytoplasmic segment spans residues 321–334; that stretch reads VSYRGQMDLALGVA. Residues 335–355 form a helical membrane-spanning segment; it reads IGSSIQIALFLAPFLVIVGWI. Topologically, residues 356 to 358 are lumenal; sequence ISQ. The chain crosses the membrane as a helical span at residues 359–379; it reads PLTLYFESLETVILFVSVFLV. Topologically, residues 380 to 389 are cytoplasmic; the sequence is NYLIQDGATH. Residues 390 to 410 traverse the membrane as a helical segment; the sequence is WLEGVQLLALYAIVVLAFFYY. Over 411-412 the chain is Lumenal; sequence PQ.

The protein belongs to the Ca(2+):cation antiporter (CaCA) (TC 2.A.19) family.

The protein resides in the vacuole membrane. Its subcellular location is the endoplasmic reticulum membrane. Functionally, has a role in promoting intracellular calcium ion sequestration via the exchange of calcium ions for hydrogen ions across the vacuolar membrane. Involved also in manganese ion homeostasis via its uptake into the vacuole. In Schizosaccharomyces pombe (strain 972 / ATCC 24843) (Fission yeast), this protein is Vacuolar calcium ion transporter (vcx1).